The chain runs to 88 residues: MANHKSAKKRILRNASRSEINHARIGRIRTFVKKVEAAIASGDKDAAKAAFQIAMPEVQRGVTKGVLHQNTASRKISRLSARIKAIGA.

Belongs to the bacterial ribosomal protein bS20 family.

In terms of biological role, binds directly to 16S ribosomal RNA. The sequence is that of Small ribosomal subunit protein bS20 from Rhodospirillum rubrum (strain ATCC 11170 / ATH 1.1.1 / DSM 467 / LMG 4362 / NCIMB 8255 / S1).